The following is a 182-amino-acid chain: tRNA-splicing endonuclease (182 aa).

Catalysis depends on residues tyrosine 119, histidine 127, and lysine 158.

The protein belongs to the tRNA-intron endonuclease family. Archaeal short subfamily. Homotetramer; although the tetramer contains four active sites, only two participate in the cleavage. Therefore, it should be considered as a dimer of dimers.

The catalysed reaction is pretRNA = a 3'-half-tRNA molecule with a 5'-OH end + a 5'-half-tRNA molecule with a 2',3'-cyclic phosphate end + an intron with a 2',3'-cyclic phosphate and a 5'-hydroxyl terminus.. In terms of biological role, endonuclease that removes tRNA introns. Cleaves pre-tRNA at the 5'- and 3'-splice sites to release the intron. The products are an intron and two tRNA half-molecules bearing 2',3' cyclic phosphate and 5'-OH termini. Recognizes a pseudosymmetric substrate in which 2 bulged loops of 3 bases are separated by a stem of 4 bp. This is tRNA-splicing endonuclease from Saccharolobus islandicus (strain Y.N.15.51 / Yellowstone #2) (Sulfolobus islandicus).